The primary structure comprises 685 residues: Diphthine--ammonia ligase (685 aa).

It in the C-terminal section; belongs to the RutC family. In the N-terminal section; belongs to the Diphthine--ammonia ligase family. Interacts with elongation factor 2 (eEF-2; EFT1 or EFT2).

Its subcellular location is the cytoplasm. The enzyme catalyses diphthine-[translation elongation factor 2] + NH4(+) + ATP = diphthamide-[translation elongation factor 2] + AMP + diphosphate + H(+). It functions in the pathway protein modification; peptidyl-diphthamide biosynthesis. Its function is as follows. Amidase that catalyzes the last step of diphthamide biosynthesis using ammonium and ATP. Diphthamide biosynthesis consists in the conversion of an L-histidine residue in the translation elongation factor eEF-2 (EFT1 or EFT2) to diphthamide. The chain is Diphthine--ammonia ligase (DPH6) from Saccharomyces cerevisiae (strain ATCC 204508 / S288c) (Baker's yeast).